The chain runs to 694 residues: Elongation factor G (694 aa).

Positions 9–288 (SKIRNIGIMA…VIVKWLPSPK (280 aa)) constitute a tr-type G domain. GTP contacts are provided by residues 18-25 (AHIDAGKT), 82-86 (DTPGH), and 136-139 (NKMD).

Belongs to the TRAFAC class translation factor GTPase superfamily. Classic translation factor GTPase family. EF-G/EF-2 subfamily.

Its subcellular location is the cytoplasm. In terms of biological role, catalyzes the GTP-dependent ribosomal translocation step during translation elongation. During this step, the ribosome changes from the pre-translocational (PRE) to the post-translocational (POST) state as the newly formed A-site-bound peptidyl-tRNA and P-site-bound deacylated tRNA move to the P and E sites, respectively. Catalyzes the coordinated movement of the two tRNA molecules, the mRNA and conformational changes in the ribosome. The sequence is that of Elongation factor G from Chlamydia caviae (strain ATCC VR-813 / DSM 19441 / 03DC25 / GPIC) (Chlamydophila caviae).